The following is a 298-amino-acid chain: Acetyl-coenzyme A carboxylase carboxyl transferase subunit beta (298 aa).

The 258-residue stretch at 41 to 298 folds into the CoA carboxyltransferase N-terminal domain; the sequence is PTIECPECHA…RIVSKLMNLP (258 aa). Residues cysteine 45, cysteine 48, cysteine 64, and cysteine 67 each coordinate Zn(2+). The C4-type zinc finger occupies 45-67; it reads CPECHALVTRTAIAFNAYVCPSC.

It belongs to the AccD/PCCB family. Acetyl-CoA carboxylase is a heterohexamer composed of biotin carboxyl carrier protein (AccB), biotin carboxylase (AccC) and two subunits each of ACCase subunit alpha (AccA) and ACCase subunit beta (AccD). Requires Zn(2+) as cofactor.

The protein localises to the cytoplasm. It carries out the reaction N(6)-carboxybiotinyl-L-lysyl-[protein] + acetyl-CoA = N(6)-biotinyl-L-lysyl-[protein] + malonyl-CoA. The protein operates within lipid metabolism; malonyl-CoA biosynthesis; malonyl-CoA from acetyl-CoA: step 1/1. Functionally, component of the acetyl coenzyme A carboxylase (ACC) complex. Biotin carboxylase (BC) catalyzes the carboxylation of biotin on its carrier protein (BCCP) and then the CO(2) group is transferred by the transcarboxylase to acetyl-CoA to form malonyl-CoA. The polypeptide is Acetyl-coenzyme A carboxylase carboxyl transferase subunit beta (Acinetobacter baylyi (strain ATCC 33305 / BD413 / ADP1)).